The primary structure comprises 404 residues: Photosynthetic reaction center cytochrome c subunit (404 aa).

A signal peptide spans 1-22; sequence MSPAQQLTLPAVIVVASVMLLG. A lipid anchor (N-palmitoyl cysteine) is attached at Cys-23. Cys-23 carries S-diacylglycerol cysteine lipidation. Residues Met-94, Cys-107, Cys-110, His-111, Met-130, His-144, Cys-152, Cys-155, His-156, Met-236, Cys-247, Cys-250, His-251, Cys-307, Cys-310, and His-311 each contribute to the heme site. The disordered stretch occupies residues 346 to 404; the sequence is ASEAAPAAATEAAPEAPAQEVPAAEAVPAAAEPGAAEAAGSVEPAPVEEVAPAPAAQRL.

As to quaternary structure, component of the photosynthetic reaction center composed of protein subunits L (PufL), M (PufM), H (PuhA) and cytochrome C (PufC). The reaction center interacts with light-harvesting antenna complex LH1. In terms of processing, binds 4 heme groups per subunit.

It is found in the cellular chromatophore membrane. Its function is as follows. The reaction center of purple bacteria contains a tightly bound cytochrome molecule which re-reduces the photo oxidized primary electron donor. The polypeptide is Photosynthetic reaction center cytochrome c subunit (Thermochromatium tepidum (Chromatium tepidum)).